Reading from the N-terminus, the 404-residue chain is Cytoplasmic tRNA 2-thiolation protein 2 (404 aa).

Belongs to the CTU2/NCS2 family.

The protein localises to the cytoplasm. It participates in tRNA modification; 5-methoxycarbonylmethyl-2-thiouridine-tRNA biosynthesis. Its function is as follows. Plays a central role in 2-thiolation of mcm(5)S(2)U at tRNA wobble positions of tRNA(Lys), tRNA(Glu) and tRNA(Gln). May act by forming a heterodimer with NCS6/CTU1 that ligates sulfur from thiocarboxylated URM1 onto the uridine of tRNAs at wobble position. In Drosophila erecta (Fruit fly), this protein is Cytoplasmic tRNA 2-thiolation protein 2.